We begin with the raw amino-acid sequence, 81 residues long: Photosystem I iron-sulfur center (81 aa).

4Fe-4S ferredoxin-type domains are found at residues Ala2–Trp31 and Ile39–Tyr68. Positions 11, 14, 17, 21, 48, 51, 54, and 58 each coordinate [4Fe-4S] cluster.

As to quaternary structure, the eukaryotic PSI reaction center is composed of at least 11 subunits. Requires [4Fe-4S] cluster as cofactor.

It is found in the plastid. It localises to the chloroplast thylakoid membrane. It carries out the reaction reduced [plastocyanin] + hnu + oxidized [2Fe-2S]-[ferredoxin] = oxidized [plastocyanin] + reduced [2Fe-2S]-[ferredoxin]. Apoprotein for the two 4Fe-4S centers FA and FB of photosystem I (PSI); essential for photochemical activity. FB is the terminal electron acceptor of PSI, donating electrons to ferredoxin. The C-terminus interacts with PsaA/B/D and helps assemble the protein into the PSI complex. Required for binding of PsaD and PsaE to PSI. PSI is a plastocyanin-ferredoxin oxidoreductase, converting photonic excitation into a charge separation, which transfers an electron from the donor P700 chlorophyll pair to the spectroscopically characterized acceptors A0, A1, FX, FA and FB in turn. In Marchantia polymorpha (Common liverwort), this protein is Photosystem I iron-sulfur center.